The primary structure comprises 152 residues: 3-hydroxyacyl-[acyl-carrier-protein] dehydratase FabZ (152 aa).

Histidine 58 is an active-site residue.

This sequence belongs to the thioester dehydratase family. FabZ subfamily.

The protein localises to the cytoplasm. The enzyme catalyses a (3R)-hydroxyacyl-[ACP] = a (2E)-enoyl-[ACP] + H2O. Its function is as follows. Involved in unsaturated fatty acids biosynthesis. Catalyzes the dehydration of short chain beta-hydroxyacyl-ACPs and long chain saturated and unsaturated beta-hydroxyacyl-ACPs. The sequence is that of 3-hydroxyacyl-[acyl-carrier-protein] dehydratase FabZ from Synechococcus sp. (strain RCC307).